A 348-amino-acid polypeptide reads, in one-letter code: Mamu class I histocompatibility antigen, alpha chain F (348 aa).

The signal sequence occupies residues methionine 1–alanine 21. The tract at residues glycine 22 to alanine 113 is alpha-1. The Extracellular portion of the chain corresponds to glycine 22–isoleucine 307. Residue asparagine 109 is glycosylated (N-linked (GlcNAc...) asparagine). Positions glycine 114 to alanine 205 are alpha-2. Disulfide bonds link cysteine 124-cysteine 187 and cysteine 226-cysteine 282. The segment at aspartate 206 to tryptophan 297 is alpha-3. Positions proline 208–arginine 296 constitute an Ig-like C1-type domain. The segment at glutamate 298–isoleucine 307 is connecting peptide. The helical transmembrane segment at valine 308–tryptophan 331 threads the bilayer. The Cytoplasmic portion of the chain corresponds to arginine 332 to methionine 348.

It belongs to the MHC class I family. Heterodimer of an alpha chain and a beta chain (beta-2-microglobulin).

The protein localises to the membrane. In terms of biological role, involved in the presentation of foreign antigens to the immune system. The polypeptide is Mamu class I histocompatibility antigen, alpha chain F (Mamu-F) (Macaca mulatta (Rhesus macaque)).